The following is a 300-amino-acid chain: Putative zinc finger protein 705EP (300 aa).

One can recognise a KRAB domain in the interval 7–78 (VTFEDVAIDF…GREFLQDQNP (72 aa)). Residues 172–194 (YQCNLCEKAYTNCFHLRRPKMTH) form a C2H2-type 1; degenerate zinc finger. C2H2-type zinc fingers lie at residues 200–222 (YTCH…EKTH) and 228–250 (YKCH…ERTH). A C2H2-type 4; degenerate zinc finger spans residues 256–278 (YECDNSGKAFSQSSGFRGNKIIH).

The protein belongs to the krueppel C2H2-type zinc-finger protein family.

It localises to the nucleus. In terms of biological role, may be involved in transcriptional regulation. This chain is Putative zinc finger protein 705EP, found in Homo sapiens (Human).